The chain runs to 419 residues: Prolyl hydroxylase EGLN2 (419 aa).

Low complexity-rich tracts occupy residues 1 to 18 (MDSP…PQLP) and 64 to 73 (TTATATTTTA). 2 disordered regions span residues 1 to 89 (MDSP…GELW) and 108 to 181 (AAQG…REEV). The Bipartite nuclear localization signal signature appears at 89 to 134 (WPLQSEGAAALVTKECQRLAAQGARPEAPKRKWAKDGGDAPSPSKR). The span at 115 to 126 (EAPKRKWAKDGG) shows a compositional bias: basic and acidic residues. Position 130 is a phosphoserine (Ser130). The segment covering 154-174 (SGASNSSSSSSNTTSSSGEAS) has biased composition (low complexity). A beta(2)beta(3) 'finger-like' loop region spans residues 237–247 (VSQRAIPPRSI). The Fe2OG dioxygenase domain maps to 290–388 (GRTKAMVACY…RYAITVWYFD (99 aa)). Fe cation is bound by residues His309, Asp311, and His370. A 2-oxoglutarate-binding site is contributed by Arg379.

As to quaternary structure, interacts with E3 ligase SIAH2. Interacts with LIMD1, WTIP and AJUBA. Fe(2+) is required as a cofactor. It depends on L-ascorbate as a cofactor. Post-translationally, ubiquitinated by SIAH1 and/or SIAH2 in response to the unfolded protein response (UPR), leading to its degradation. In terms of tissue distribution, highly expressed in testis, expression was also detected in the heart brain, liver kidney and lung. Expression was lowest in spleen and skeletal muscle. Constitutively expressed during differentiation of C2C12 skeletal myocytes.

It localises to the nucleus. It carries out the reaction L-prolyl-[protein] + 2-oxoglutarate + O2 = trans-4-hydroxy-L-prolyl-[protein] + succinate + CO2. It catalyses the reaction L-prolyl-[hypoxia-inducible factor alpha subunit] + 2-oxoglutarate + O2 = trans-4-hydroxy-L-prolyl-[hypoxia-inducible factor alpha subunit] + succinate + CO2. Functionally, prolyl hydroxylase that mediates hydroxylation of proline residues in target proteins, such as ATF4, IKBKB, CEP192 and HIF1A. Target proteins are preferentially recognized via a LXXLAP motif. Cellular oxygen sensor that catalyzes, under normoxic conditions, the post-translational formation of 4-hydroxyproline in hypoxia-inducible factor (HIF) alpha proteins. Hydroxylates a specific proline found in each of the oxygen-dependent degradation (ODD) domains (N-terminal, NODD, and C-terminal, CODD) of HIF1A. Also hydroxylates HIF2A. Has a preference for the CODD site for both HIF1A and HIF2A. Hydroxylated HIFs are then targeted for proteasomal degradation via the von Hippel-Lindau ubiquitination complex. Under hypoxic conditions, the hydroxylation reaction is attenuated allowing HIFs to escape degradation resulting in their translocation to the nucleus, heterodimerization with HIF1B, and increased expression of hypoxy-inducible genes. EGLN2 is involved in regulating hypoxia tolerance and apoptosis in cardiac and skeletal muscle. Also regulates susceptibility to normoxic oxidative neuronal death. Links oxygen sensing to cell cycle and primary cilia formation by hydroxylating the critical centrosome component CEP192 which promotes its ubiquitination and subsequent proteasomal degradation. Hydroxylates IKBKB, mediating NF-kappa-B activation in hypoxic conditions. Also mediates hydroxylation of ATF4, leading to decreased protein stability of ATF4. The sequence is that of Prolyl hydroxylase EGLN2 from Mus musculus (Mouse).